A 525-amino-acid polypeptide reads, in one-letter code: Cytochrome P450 monooxygenase tpcC (525 aa).

Residues 13 to 33 traverse the membrane as a helical segment; the sequence is LPVTLVSLLVGSIFYFCYLTV. Residue Cys-457 participates in heme binding.

Belongs to the cytochrome P450 family. Heme is required as a cofactor.

It is found in the membrane. It functions in the pathway secondary metabolite biosynthesis; terpenoid biosynthesis. Its function is as follows. Cytochrome P450 monooxygenase; part of the gene cluster that mediates the biosynthesis of terpestacin. The bifunctional terpene synthase tpcA converts isopentenyl diphosphate (IPP) and dimethylallyl diphosphate (DMAPP) into the sesterterpene preterpestacin I. The C-terminal prenyltransferase (PT) domain of tpcA catalyzes formation of GFPP, whereas the N-terminal terpene cyclase (TC) domain catalyzes the cyclization of GFPP into preterpestacin I. The cytochrome P450 monooxygenase tpcB then hydroxylates preterpestacin I to yield 24-hydroxypreterpstacin I (renamed as preterpestacin II) whereas the cytochrome P450 monooxygenase tpcC further hydroxylates preterpestacin II to yield 16,17-dihydroxypreterpestacin II (renamed as preterpestacin III). Finally, the FAD-dependent monooxygenase tpcD converts preterpestacin III into terpestacin. In Cochliobolus heterostrophus (strain C5 / ATCC 48332 / race O) (Southern corn leaf blight fungus), this protein is Cytochrome P450 monooxygenase tpcC.